The sequence spans 242 residues: tRNA (guanine-N(1)-)-methyltransferase (242 aa).

Residues Gly-112 and 131-136 (LGDFIL) each bind S-adenosyl-L-methionine.

It belongs to the RNA methyltransferase TrmD family. Homodimer.

The protein resides in the cytoplasm. The enzyme catalyses guanosine(37) in tRNA + S-adenosyl-L-methionine = N(1)-methylguanosine(37) in tRNA + S-adenosyl-L-homocysteine + H(+). Specifically methylates guanosine-37 in various tRNAs. The chain is tRNA (guanine-N(1)-)-methyltransferase from Crocosphaera subtropica (strain ATCC 51142 / BH68) (Cyanothece sp. (strain ATCC 51142)).